Consider the following 147-residue polypeptide: Delta-latroinsectotoxin-Lhe1a (147 aa).

ANK repeat units follow at residues 57-59 (VSI), 66-78 (NNWT…IYFK), 79-96 (KNPA…DIEA), and 98-125 (TSIM…TLDE).

Belongs to the cationic peptide 01 (latrotoxin) family. 04 (delta-latroinsectotoxin) subfamily. In terms of assembly, homotetramer in membrane. Expressed by the venom gland.

The protein resides in the secreted. It is found in the target cell membrane. In terms of biological role, insecticidal presynaptic neurotoxin that induces massive neurotransmitter release at insect (but not vertebrate) neuromuscular junctions. Native toxin forms cation-permeable pores (with high permeability to calcium) in lipid membranes locust muscle membrane and artificial lipid bilayers. May bind to insect neurexin-1 homolog, insect adhesion G protein-coupled receptor L1 homolog, and insect receptor-type tyrosine-protein phosphatase S homolog, and induces neurotransmitter exocytosis both by forming tetrameric pores in membranes and signaling via G protein-coupled receptor. Oligomerization is a process independent of divalent cations. This is Delta-latroinsectotoxin-Lhe1a from Latrodectus hesperus (Western black widow spider).